Reading from the N-terminus, the 207-residue chain is Riboflavin synthase (207 aa).

2 Lumazine-binding repeats span residues 1 to 94 (MFTG…LGGH) and 95 to 191 (IVQG…INYL). 2,4-dihydroxypteridine is bound by residues 4-6 (GLV), 45-47 (CLT), 59-64 (DVSPET), 98-100 (GHV), Lys133, 142-144 (SLT), and 156-161 (NIIPHT).

Homotrimer.

It catalyses the reaction 2 6,7-dimethyl-8-(1-D-ribityl)lumazine + H(+) = 5-amino-6-(D-ribitylamino)uracil + riboflavin. Its pathway is cofactor biosynthesis; riboflavin biosynthesis; riboflavin from 2-hydroxy-3-oxobutyl phosphate and 5-amino-6-(D-ribitylamino)uracil: step 2/2. Catalyzes the dismutation of two molecules of 6,7-dimethyl-8-ribityllumazine, resulting in the formation of riboflavin and 5-amino-6-(D-ribitylamino)uracil. This Aquifex aeolicus (strain VF5) protein is Riboflavin synthase (ribE).